Consider the following 160-residue polypeptide: Putative pre-16S rRNA nuclease (160 aa).

It belongs to the YqgF nuclease family.

Its subcellular location is the cytoplasm. In terms of biological role, could be a nuclease involved in processing of the 5'-end of pre-16S rRNA. The polypeptide is Putative pre-16S rRNA nuclease (Gluconobacter oxydans (strain 621H) (Gluconobacter suboxydans)).